We begin with the raw amino-acid sequence, 162 residues long: Putative ankyrin repeat protein R664 (162 aa).

ANK repeat units lie at residues 10–40 (KKLV…NVNY), 47–78 (NDTP…DVNY), and 82–111 (YHET…NPYL).

This Acanthamoeba polyphaga mimivirus (APMV) protein is Putative ankyrin repeat protein R664.